The sequence spans 189 residues: Tumor protein p53-inducible protein 11 (189 aa).

Residues 1–63 (MAGKQPPPLM…FAVREPLGLR (63 aa)) are Cytoplasmic-facing. The residue at position 14 (Ser-14) is a Phosphoserine. A helical membrane pass occupies residues 64 to 84 (VWQFLSAMLFSSVAIMALALP). Residues 85–108 (DQLYDAVFDGAEVTSKTPIRLYGG) lie on the Extracellular side of the membrane. The helical transmembrane segment at 109–129 (ALLSISLIMWNALYTAEKVII) threads the bilayer. A topological domain (cytoplasmic) is located at residue Arg-130. Residues 131 to 151 (WTLLTEACYFGVQSLVVTATL) traverse the membrane as a helical segment. The Extracellular portion of the chain corresponds to 152–155 (AETG). Residues 156–176 (LMSLGTVLLLASRLLFVIVSI) traverse the membrane as a helical segment. At 177–189 (YYYYQVGRKPKKV) the chain is on the cytoplasmic side.

The protein localises to the membrane. The chain is Tumor protein p53-inducible protein 11 (Trp53i11) from Mus musculus (Mouse).